Consider the following 604-residue polypeptide: Putative O-acetyltransferase SACOL0978 (604 aa).

11 helical membrane passes run 15 to 35, 43 to 63, 85 to 105, 150 to 170, 176 to 196, 212 to 232, 240 to 260, 267 to 287, 310 to 330, 332 to 352, and 377 to 397; these read YIPGLDGLRAIAVLGIIIYHL, GFLGVDTFFVISGYLITSLLL, LLPAVIVLLMVVGTATLLLKS, AIEEQFYIFFPVILVTLLLTI, IGFIFWGVSIISLGLMMFIYS, LQTLLLGVILAFLWPPFKLKN, YVIDSIGSLSFIVLILLFFII, IYDGGFYLISILTLFIIASVV, YSLYLWHFAVISFVHSYYVDG, IPVYVYFIDISLTIIFAELSY, and FIRMAIVVTLLIPFMLILVGA. Residues serine 459, aspartate 581, and histidine 584 contribute to the active site.

It belongs to the acyltransferase 3 family.

The protein resides in the cell membrane. The chain is Putative O-acetyltransferase SACOL0978 from Staphylococcus aureus (strain COL).